Here is a 61-residue protein sequence, read N- to C-terminus: uncharacterized protein (61 aa).

This is an uncharacterized protein from Acidianus convivator (ATV).